Reading from the N-terminus, the 397-residue chain is MEDSSEIKVETASSRTSWIQSSVAAGGKRISRALGYITGEMKECAEGLKDKSPVFQFLDWVLRGTSQVMFVNNPLSGILIVIGLFVQNPWWAIAGCLGTVMSTLTALILSQDRSAIASGLHGYNGVLVGLLIAVFSDKGDYYWWLLLPVIVMSMSCPILSSALGTIFSKWDLPVFTLPFNIAVTLYLAATGHYNLFFPTTLLQPVSSVPNITWSEIQVPLLLRAIPVGIGQVYGCDNPWTGGIFLIALFISSPLICLHAAIGSTMGMLAALTIATPFDSIYFGLCGFNSTLACIAVGGMFYVITWQTHLLAVACALFAAYVGAALTNVLSVFGLPTCTWPFCISALIFLLLTTNNPAIYKLPLSKVTYPEANRTYYLTQERNRRSSTITKYQAYDVS.

5 helical membrane-spanning segments follow: residues 68–85 (VMFV…IGLF), 92–109 (AIAG…ALIL), 115–135 (AIAS…IAVF), 143–163 (WWLL…SSAL), and 172–192 (LPVF…ATGH). Residue asparagine 210 is glycosylated (N-linked (GlcNAc...) asparagine). 5 consecutive transmembrane segments (helical) span residues 239-257 (WTGG…LICL), 264-280 (TMGM…FDSI), 287-303 (FNST…FYVI), 309-329 (LLAV…TNVL), and 331-351 (VFGL…FLLL).

The protein belongs to the urea transporter family. As to expression, kidney.

Its subcellular location is the apical cell membrane. It localises to the basolateral cell membrane. It carries out the reaction urea(in) = urea(out). Inhibited by urea analogs and phloretin. Functionally, mediates the transport of urea driven by a concentration gradient across the cell membrane of the renal inner medullary collecting duct which is critical to the urinary concentrating mechanism. This is Urea transporter 2 (SLC14A2) from Oryctolagus cuniculus (Rabbit).